Here is a 336-residue protein sequence, read N- to C-terminus: Aldo-keto reductase str7 (336 aa).

Asp-57 lines the NADP(+) pocket. The Proton donor role is filled by Tyr-62. Substrate is bound at residue His-124. Residues 154–155 (SE), Gln-174, 206–220 (SPLG…YKSP), and 283–291 (KKIKYLEEN) each bind NADP(+).

This sequence belongs to the aldo/keto reductase family. Aldo/keto reductase 2 subfamily.

The protein operates within mycotoxin biosynthesis. Its function is as follows. Aldo-keto reductase; part of the gene cluster that mediates the biosynthesis of strobilurin A, an antifungal polyketide that contains a key beta-methoxyacrylate toxophore that targets the complex III of the mitochondrial electron transport chain. Strobilurin biosynthesis begins with construction of benzoyl CoA by step-wise elimination of ammonia from phenylalanine by the phenylalanine ammonia-lyase str11, oxygenation by str8 and retro-Claisen reaction to form benzoic acid, which is activated to its CoA thiolester benzoyl CoA by the dedicated CoA ligase str10. Benzoyl CoA forms the starter unit for the highly reducing polyketide synthase stpks1 that produces the polyketide prestrobilutin A. The FAD-dependent oxygenase str9 then catalyzes the key oxidative rearrangement responsible for the creation of the beta-methoxyacrylate toxophore. Str9 performs epoxidation of the 2,3 olefin of prestrobilutin A, followed by Meinwald rearrangement to furnish the aldehyde intermediate. Rapid enolization of the aldehyde intermediate would give the beta-methoxyacrylate skeleton and methylations catalyzed by str2 and str3 complete the synthesis and lead to the production of strobilurin A. The short-chain dehydrogenase stl2 and the dehydrogenase str4 play a role in the shunt pathway leading to the production of bolineol. The cluster encodes no obvious halogenase gene that could be involved in production of strobilurin B, nor any obvious dimethylallyl-transferase that could be involved in the production of strobilurin G. It is possible that unknown proteins encoded in, or near, the cluster (such as str1 or stl1) may form new classes of halogenases or dimethylally-transferases, or that the responsible genes are located elsewhere on the genome. Similarly, proteins encoded by str5/str6 hydrolases appear to have no chemical role in the biosynthesis of strobilurin A. Finally, no obvious self-resistance gene is found within the cluster. The chain is Aldo-keto reductase str7 from Strobilurus tenacellus.